Reading from the N-terminus, the 148-residue chain is Large ribosomal subunit protein bL9 (148 aa).

This sequence belongs to the bacterial ribosomal protein bL9 family.

In terms of biological role, binds to the 23S rRNA. This is Large ribosomal subunit protein bL9 from Geobacter sulfurreducens (strain ATCC 51573 / DSM 12127 / PCA).